Consider the following 207-residue polypeptide: N-(5'-phosphoribosyl)anthranilate isomerase (207 aa).

The protein belongs to the TrpF family.

The catalysed reaction is N-(5-phospho-beta-D-ribosyl)anthranilate = 1-(2-carboxyphenylamino)-1-deoxy-D-ribulose 5-phosphate. It participates in amino-acid biosynthesis; L-tryptophan biosynthesis; L-tryptophan from chorismate: step 3/5. The protein is N-(5'-phosphoribosyl)anthranilate isomerase of Legionella pneumophila (strain Paris).